We begin with the raw amino-acid sequence, 1310 residues long: Angiotensin-converting enzyme (1310 aa).

Residues 1–33 (MGAAPGRRGPRLLRPPPPLLLLLLLLRPPPAAL) form the signal peptide. Residues 34–1260 (TLDPGLLPGD…GMNLDAQQAR (1227 aa)) lie on the Extracellular side of the membrane. Peptidase M2 domains lie at 45-628 (AADE…LGWP) and 647-1226 (VTDE…LGWP). Asparagine 59, asparagine 79, and asparagine 151 each carry an N-linked (GlcNAc...) asparagine glycan. Cysteine 162 and cysteine 170 form a disulfide bridge. Position 236 (tyrosine 236) interacts with chloride. A glycan (N-linked (GlcNAc...) asparagine) is linked at asparagine 323. Cysteine 364 and cysteine 382 are oxidised to a cystine. Histidine 395 provides a ligand contact to Zn(2+). The active-site Proton acceptor 1 is glutamate 396. 2 residues coordinate Zn(2+): histidine 399 and glutamate 422. 2 N-linked (GlcNAc...) asparagine glycosylation sites follow: asparagine 449 and asparagine 513. Residue histidine 524 is the Proton donor 1 of the active site. Position 533 (arginine 533) interacts with chloride. Cysteine 549 and cysteine 561 form a disulfide bridge. N-linked (GlcNAc...) asparagine glycosylation is found at asparagine 681, asparagine 699, and asparagine 718. A disulfide bond links cysteine 761 and cysteine 767. 2 residues coordinate chloride: arginine 795 and tyrosine 833. A glycan (N-linked (GlcNAc...) asparagine) is linked at asparagine 946. A disulfide bridge connects residues cysteine 961 and cysteine 979. Histidine 992 is a binding site for Zn(2+). Glutamate 993 acts as the Proton acceptor 2 in catalysis. Zn(2+)-binding residues include histidine 996 and glutamate 1020. 2 residues coordinate chloride: tryptophan 1094 and arginine 1098. Catalysis depends on histidine 1122, which acts as the Proton donor 2. Arginine 1131 contributes to the chloride binding site. A disulfide bridge connects residues cysteine 1147 and cysteine 1159. Asparagine 1195 is a glycosylation site (N-linked (GlcNAc...) asparagine). The segment at 1219–1260 (HGEKLGWPQYTWTPNSARSEGSLPDSGRVNFLGMNLDAQQAR) is juxtamembrane stalk. The chain crosses the membrane as a helical span at residues 1261–1281 (VGQWVLLFLGVALLLASLGLT). The Cytoplasmic segment spans residues 1282-1310 (QRLFSIRYQSLRQPHHGPQFGSEVELRHS). Position 1303 is a phosphoserine (serine 1303).

Belongs to the peptidase M2 family. In terms of assembly, monomer and homodimer; homodimerizes following binding to an inhibitor. Interacts with calmodulin (CALM1, CALM2 or CALM3); interaction takes place in the cytoplasmic region and regulates phosphorylation and proteolytic cleavage. It depends on Zn(2+) as a cofactor. Chloride is required as a cofactor. N-glycosylated. In terms of processing, phosphorylated by CK2 on Ser-1303; which allows membrane retention. Phosphorylated on tyrosine residues on its extracellular part, promoting cleavage by secretase enzymes and formation of the soluble form (Angiotensin-converting enzyme, soluble form). Post-translationally, produced following proteolytic cleavage by secretase enzymes that cleave the transmembrane form in the juxtamembrane stalk region upstream of the transmembrane region. Cleavage can take place at different sites of the juxtamembrane stalk region. As to expression, testis-specific isoform is expressed in spermatocytes, adult testis.

Its subcellular location is the cell membrane. It is found in the cytoplasm. It localises to the secreted. It catalyses the reaction Release of a C-terminal dipeptide, oligopeptide-|-Xaa-Yaa, when Xaa is not Pro, and Yaa is neither Asp nor Glu. Thus, conversion of angiotensin I to angiotensin II, with increase in vasoconstrictor activity, but no action on angiotensin II.. The catalysed reaction is angiotensin I + H2O = L-histidyl-L-leucine + angiotensin II. The enzyme catalyses bradykinin + H2O = L-Phe-L-Arg + bradykinin(1-7). It carries out the reaction substance P + H2O = substance P(1-9) + L-Leu-L-Met-NH2. It catalyses the reaction substance P + H2O = substance P(1-8) + Gly-L-Leu-L-Met-NH2. The catalysed reaction is substance P + H2O = L-Phe-L-Phe-Gly-L-Leu-L-Met-NH2 + substance P(1-6). The enzyme catalyses neurotensin + H2O = neurotensin(1-11) + L-isoleucyl-L-leucine. It carries out the reaction goralatide + H2O = N-acetyl-L-seryl-L-aspartate + L-lysyl-L-proline. It catalyses the reaction Met-enkephalin + H2O = L-phenylalanyl-L-methionine + L-tyrosylglycylglycine. The catalysed reaction is Leu-enkephalin + H2O = L-tyrosylglycylglycine + L-phenylalanyl-L-leucine. The enzyme catalyses Met-enkephalin-Arg-Phe + H2O = L-arginyl-L-phenylalanine + Met-enkephalin. The dipeptidyl carboxypeptidase activity is strongly activated by chloride. Specifically inhibited by lisinopril. Inhibited by mixanpril, an orally-active drug used for the treatment of hypertension. With respect to regulation, strongly inhibited by lisinopril and captopril. Dipeptidyl carboxypeptidase that removes dipeptides from the C-terminus of a variety of circulating hormones, such as angiotensin I, bradykinin or enkephalins, thereby playing a key role in the regulation of blood pressure, electrolyte homeostasis or synaptic plasticity. Composed of two similar catalytic domains, each possessing a functional active site, with different selectivity for substrates. Plays a major role in the angiotensin-renin system that regulates blood pressure and sodium retention by the kidney by converting angiotensin I to angiotensin II, resulting in an increase of the vasoconstrictor activity of angiotensin. Also able to inactivate bradykinin, a potent vasodilator, and therefore enhance the blood pressure response. Acts as a regulator of synaptic transmission by mediating cleavage of neuropeptide hormones, such as substance P, neurotensin or enkephalins. Catalyzes degradation of different enkephalin neuropeptides (Met-enkephalin, Leu-enkephalin, Met-enkephalin-Arg-Phe and possibly Met-enkephalin-Arg-Gly-Leu). Acts as a regulator of synaptic plasticity in the nucleus accumbens of the brain by mediating cleavage of Met-enkephalin-Arg-Phe, a strong ligand of Mu-type opioid receptor OPRM1, into Met-enkephalin. Met-enkephalin-Arg-Phe cleavage by ACE decreases activation of OPRM1, leading to long-term synaptic potentiation of glutamate release. Also acts as a regulator of hematopoietic stem cell differentiation by mediating degradation of hemoregulatory peptide N-acetyl-SDKP (AcSDKP). Acts as a regulator of cannabinoid signaling pathway by mediating degradation of hemopressin, an antagonist peptide of the cannabinoid receptor CNR1. Involved in amyloid-beta metabolism by catalyzing degradation of Amyloid-beta protein 40 and Amyloid-beta protein 42 peptides, thereby preventing plaque formation. Catalyzes cleavage of cholecystokinin (maturation of Cholecystokinin-8 and Cholecystokinin-5) and Gonadoliberin-1 (both maturation and degradation) hormones. Degradation of hemoregulatory peptide N-acetyl-SDKP (AcSDKP) and amyloid-beta proteins is mediated by the N-terminal catalytic domain, while angiotensin I and cholecystokinin cleavage is mediated by the C-terminal catalytic region. In terms of biological role, soluble form that is released in blood plasma and other body fluids following proteolytic cleavage in the juxtamembrane stalk region. Its function is as follows. Isoform produced by alternative promoter usage that is specifically expressed in spermatocytes and adult testis, and which is required for male fertility. In contrast to somatic isoforms, only contains one catalytic domain. Acts as a dipeptidyl carboxypeptidase that removes dipeptides from the C-terminus of substrates. The identity of substrates that are needed for male fertility is unknown. May also have a glycosidase activity which releases GPI-anchored proteins from the membrane by cleaving the mannose linkage in the GPI moiety. The GPIase activity was reported to be essential for the egg-binding ability of the sperm. This activity is however unclear and has been challenged by other groups, suggesting that it may be indirect. This is Angiotensin-converting enzyme from Oryctolagus cuniculus (Rabbit).